The chain runs to 513 residues: Pantetheinase (513 aa).

Positions 1 to 21 are cleaved as a signal peptide; that stretch reads MTTQLPAYVAILLFYVSRASC. Asn-38 carries an N-linked (GlcNAc...) asparagine glycan. The CN hydrolase domain occupies 39–306; sequence ATLTPVSREE…GKLLLSQLDS (268 aa). The active-site Proton acceptor is the Glu-79. A glycan (N-linked (GlcNAc...) asparagine) is linked at Asn-130. The Proton donor role is filled by Lys-178. Asn-200 carries N-linked (GlcNAc...) asparagine glycosylation. Cys-211 serves as the catalytic Nucleophile. N-linked (GlcNAc...) asparagine glycosylation is found at Asn-283, Asn-315, and Asn-353. Gly-491 carries the GPI-anchor amidated glycine lipid modification. Positions 492 to 513 are cleaved as a propeptide — removed in mature form; it reads LTAQARIIMLIVIAPIVCSLSW.

This sequence belongs to the carbon-nitrogen hydrolase superfamily. BTD/VNN family. As to quaternary structure, monomer. In terms of tissue distribution, widely expressed with higher expression in spleen, kidney and blood. Overexpressed in lesional psoriatic skin.

The protein resides in the cell membrane. The enzyme catalyses (R)-pantetheine + H2O = cysteamine + (R)-pantothenate. Its function is as follows. Amidohydrolase that hydrolyzes specifically one of the carboamide linkages in D-pantetheine thus recycling pantothenic acid (vitamin B5) and releasing cysteamine. The protein is Pantetheinase (VNN1) of Homo sapiens (Human).